A 487-amino-acid chain; its full sequence is Steroid 21-hydroxylase (487 aa).

Positions 92 and 117 each coordinate heme b. Residue Arg228 coordinates 17alpha-hydroxyprogesterone. Position 228 (Arg228) interacts with progesterone. His357, Arg418, and Cys420 together coordinate heme b.

This sequence belongs to the cytochrome P450 family. The cofactor is heme b.

It is found in the endoplasmic reticulum membrane. Its subcellular location is the microsome membrane. The catalysed reaction is progesterone + reduced [NADPH--hemoprotein reductase] + O2 = 21-hydroxyprogesterone + oxidized [NADPH--hemoprotein reductase] + H2O + H(+). The enzyme catalyses 17alpha-hydroxyprogesterone + reduced [NADPH--hemoprotein reductase] + O2 = 11-deoxycortisol + oxidized [NADPH--hemoprotein reductase] + H2O + H(+). Its function is as follows. A cytochrome P450 monooxygenase that plays a major role in adrenal steroidogenesis. Catalyzes the hydroxylation at C-21 of progesterone and 17alpha-hydroxyprogesterone to respectively form 11-deoxycorticosterone and 11-deoxycortisol, intermediate metabolites in the biosynthetic pathway of mineralocorticoids and glucocorticoids. Mechanistically, uses molecular oxygen inserting one oxygen atom into a substrate, and reducing the second into a water molecule, with two electrons provided by NADPH via cytochrome P450 reductase (CPR; NADPH-ferrihemoprotein reductase). The sequence is that of Steroid 21-hydroxylase (Cyp21) from Mus musculus (Mouse).